Consider the following 323-residue polypeptide: NAC transcription factor 25 (323 aa).

Residues 16–177 (LPPGFRFHPT…DWVLCRIYKK (162 aa)) enclose the NAC domain. A DNA-binding region spans residues 114-183 (VGVKKALVFY…IYKKNSSQRP (70 aa)). Low complexity predominate over residues 201–221 (KSSANSSSTSVLDNNDNNNNN). Positions 201–223 (KSSANSSSTSVLDNNDNNNNNNE) are disordered.

Expressed specifically in the tapetum.

It localises to the nucleus. Functionally, transcription factor of the NAC family. May be associated with anther development and pollen production. Required for normal seed development and morphology. In Arabidopsis thaliana (Mouse-ear cress), this protein is NAC transcription factor 25 (NAC025).